The chain runs to 629 residues: DNA mismatch repair protein MutL (629 aa).

Belongs to the DNA mismatch repair MutL/HexB family.

Functionally, this protein is involved in the repair of mismatches in DNA. It is required for dam-dependent methyl-directed DNA mismatch repair. May act as a 'molecular matchmaker', a protein that promotes the formation of a stable complex between two or more DNA-binding proteins in an ATP-dependent manner without itself being part of a final effector complex. The sequence is that of DNA mismatch repair protein MutL from Haemophilus influenzae (strain 86-028NP).